The primary structure comprises 445 residues: MKHIQKYQGKKVLVLGLGKSGYETAKLLYRLGAQVTVNDGKDVSQTEQYRELTEMGITVIGGHHPLSLLEHTTLIVKNPGIPYTLSLIEQAQTMNIPIITEVELAYEITESSILGITGTNGKTTVTSLIGDMFKAHEHAGLLCGNIGFVASKVAQNAGAHDTLVMELSSFQLMGIQEFRPHIALITNIYSAHLDYHGNQQNYIDAKMQITKNQTSEDYLIFNDKQRTLLQNYNIKSKVVYFSTDEKVEGAYIDQNKVYFYDEFIIDVKDIVLPGVHNLENVLASIAAAKLAGIDNIHICDTLKTFEGIKHRLQFVTETDGVKYYNDSKATNTLATSFALDSFHQPTHWLAGGLDRGNGFEELDTHIDHVKHMYIFGETTEKLTAFAAQHHIPYTICKDVTDAVLKTASYVERGEVVLLSPACASWDQYPTYEVRGEHFISQVKLI.

Residue 118–124 (GTNGKTT) coordinates ATP.

Belongs to the MurCDEF family.

It is found in the cytoplasm. The catalysed reaction is UDP-N-acetyl-alpha-D-muramoyl-L-alanine + D-glutamate + ATP = UDP-N-acetyl-alpha-D-muramoyl-L-alanyl-D-glutamate + ADP + phosphate + H(+). It functions in the pathway cell wall biogenesis; peptidoglycan biosynthesis. In terms of biological role, cell wall formation. Catalyzes the addition of glutamate to the nucleotide precursor UDP-N-acetylmuramoyl-L-alanine (UMA). This chain is UDP-N-acetylmuramoylalanine--D-glutamate ligase, found in Macrococcus caseolyticus (strain JCSC5402) (Macrococcoides caseolyticum).